Here is a 212-residue protein sequence, read N- to C-terminus: Uridine kinase (212 aa).

ATP is bound at residue 13–20 (GASASGKS).

The protein belongs to the uridine kinase family.

It is found in the cytoplasm. The catalysed reaction is uridine + ATP = UMP + ADP + H(+). It carries out the reaction cytidine + ATP = CMP + ADP + H(+). It participates in pyrimidine metabolism; CTP biosynthesis via salvage pathway; CTP from cytidine: step 1/3. The protein operates within pyrimidine metabolism; UMP biosynthesis via salvage pathway; UMP from uridine: step 1/1. In Shewanella amazonensis (strain ATCC BAA-1098 / SB2B), this protein is Uridine kinase.